The primary structure comprises 118 residues: Putative ankyrin repeat protein R747 (118 aa).

One copy of the ANK repeat lies at 70–99 (NCYYLLDYAIMKNDIPVIVTLIEKGANINR).

In Acanthamoeba polyphaga (Amoeba), this protein is Putative ankyrin repeat protein R747.